A 435-amino-acid polypeptide reads, in one-letter code: Mitochondrial distribution and morphology protein 12 (435 aa).

Positions 1–435 constitute an SMP-LTD domain; sequence MSIEVDWGAA…VYPSFWTFLV (435 aa). 2 disordered regions span residues 73–113 and 186–268; these read DEDD…AINH and WNDS…TSEE. Residues 96-113 show a composition bias toward basic and acidic residues; sequence THPELNESSFRDDNAINH. Low complexity predominate over residues 218 to 238; it reads SSNPTSRPSTSSTLPSHPSGS. Positions 251 to 268 are enriched in basic and acidic residues; the sequence is HGSHPEEHGHLDDPTSEE.

The protein belongs to the MDM12 family. As to quaternary structure, component of the ER-mitochondria encounter structure (ERMES) or MDM complex, composed of mmm1, mdm10, mdm12 and mdm34. A mmm1 homodimer associates with one molecule of mdm12 on each side in a pairwise head-to-tail manner, and the SMP-LTD domains of mmm1 and mdm12 generate a continuous hydrophobic tunnel for phospholipid trafficking.

The protein resides in the mitochondrion outer membrane. The protein localises to the endoplasmic reticulum membrane. Component of the ERMES/MDM complex, which serves as a molecular tether to connect the endoplasmic reticulum (ER) and mitochondria. Components of this complex are involved in the control of mitochondrial shape and protein biogenesis, and function in nonvesicular lipid trafficking between the ER and mitochondria. Mdm12 is required for the interaction of the ER-resident membrane protein mmm1 and the outer mitochondrial membrane-resident beta-barrel protein mdm10. The mdm12-mmm1 subcomplex functions in the major beta-barrel assembly pathway that is responsible for biogenesis of all mitochondrial outer membrane beta-barrel proteins, and acts in a late step after the SAM complex. The mdm10-mdm12-mmm1 subcomplex further acts in the TOM40-specific pathway after the action of the mdm12-mmm1 complex. Essential for establishing and maintaining the structure of mitochondria and maintenance of mtDNA nucleoids. In Aspergillus niger (strain ATCC MYA-4892 / CBS 513.88 / FGSC A1513), this protein is Mitochondrial distribution and morphology protein 12.